We begin with the raw amino-acid sequence, 240 residues long: Pyridoxine 5'-phosphate synthase (240 aa).

Asn7 is a 3-amino-2-oxopropyl phosphate binding site. Residue 9 to 10 coordinates 1-deoxy-D-xylulose 5-phosphate; the sequence is DH. Arg18 contacts 3-amino-2-oxopropyl phosphate. His43 (proton acceptor) is an active-site residue. The 1-deoxy-D-xylulose 5-phosphate site is built by Arg45 and His50. The active-site Proton acceptor is Glu70. Thr100 lines the 1-deoxy-D-xylulose 5-phosphate pocket. His191 acts as the Proton donor in catalysis. Residues Gly192 and 213–214 each bind 3-amino-2-oxopropyl phosphate; that span reads GH.

The protein belongs to the PNP synthase family. Homooctamer; tetramer of dimers.

Its subcellular location is the cytoplasm. It carries out the reaction 3-amino-2-oxopropyl phosphate + 1-deoxy-D-xylulose 5-phosphate = pyridoxine 5'-phosphate + phosphate + 2 H2O + H(+). It participates in cofactor biosynthesis; pyridoxine 5'-phosphate biosynthesis; pyridoxine 5'-phosphate from D-erythrose 4-phosphate: step 5/5. In terms of biological role, catalyzes the complicated ring closure reaction between the two acyclic compounds 1-deoxy-D-xylulose-5-phosphate (DXP) and 3-amino-2-oxopropyl phosphate (1-amino-acetone-3-phosphate or AAP) to form pyridoxine 5'-phosphate (PNP) and inorganic phosphate. The chain is Pyridoxine 5'-phosphate synthase from Gloeothece citriformis (strain PCC 7424) (Cyanothece sp. (strain PCC 7424)).